The primary structure comprises 806 residues: MDSRIITPGPYRATKLWNEVTKHFRAAMPLRKHRQHFKAYGNCFTASEAIDWLHQLLKTNSNFGSEVTRQQTIQLLRKFLKNHVIEDLKGRWGTEELEDNNSLYRFPSTSPVKTIPSRPPLWKRSSLENVFKEKEHLFKMPQFSKKTPKRRASVDSKEEQENEDLMEDQRNDDDFPKQLSSKDIEDIWGNITMIHLQKILGLPSLEEVLNPAQIKPNYIRYNMTNTSKHGVVVLQDKTDDLPHWVLSAMKCLANWPKNNDMSQATYIGFERDVFRTVADYFLNLPEPLLTFEFYELFVNILVVCGYITVPNSHNGKHRFHNKTRDPAPAKKQHLNDEQFFKSTECLLLSLVRKVPNEEEDDVEHSFGEIARDNKDHIPRDVFAKKNHLYGSFSRRASRGTIGGSCQNLSTSRKETGVTRKVRVRSCSLEGIADSVSTDVRDCQSNILQPSSQKPEFSVVKERPITFGNQAESVTGLNASEHKLHYRTSDGGYSQTSEKLARSVSVGDCLESRTSKNAPVAEITIKPLKSKQTRMQKRFSPTDNEPTDLDFTVTKRLCQSTMELSHSSFPSTSSLLPPTTSPNSTGSESLLQPHLEKVAIEALQLCCLLLPPANRRKLQLLMRMISRMSQNVDMPRLHDAMGTRSLMIQTFSRCVLCCAEEVDLDELLASRLVSFLMDHHQDILQVPCYLQTAVQDHVQYLQRPRVKQGTVPEYYFCKQISAQEFEEQRLATSQAAIMELLENIVRDKALAVKDKKKKLKQFQKQYPDIYQSRFPTTESEAKLFGDKPTIKQPMLMLKKPKFKSLRY.

Positions 24–108 (FRAAMPLRKH…DNNSLYRFPS (85 aa)) constitute a DEP domain. The tract at residues 142–177 (QFSKKTPKRRASVDSKEEQENEDLMEDQRNDDDFPK) is disordered. Over residues 167 to 177 (EDQRNDDDFPK) the composition is skewed to basic and acidic residues. The region spanning 279–319 (DYFLNLPEPLLTFEFYELFVNILVVCGYITVPNSHNGKHRF) is the Rho-GAP domain. The interval 564-588 (SHSSFPSTSSLLPPTTSPNSTGSES) is disordered.

This chain is DEP domain-containing protein 1A (depdc1a), found in Xenopus laevis (African clawed frog).